We begin with the raw amino-acid sequence, 319 residues long: MDSREDMVPDVLLEAPNPRRRQSADTSTERPTRPARREQGYARVTPRGERMGNHKARVAKPDFFAWFDPRWLWVPLMVCLAVGGYWAYEPLEKLLERPFKSVVVEGEFHFITKARATELISDEIDNNFLQLDLMRLKRTLTDDPWVDSVSLQRRWPDTLVVKIAEQKPIARWGDGFLNQRGQIVRVKEIDRLSGLPWLQGNESDAVEILQQYQDLSQLLRSRGLDVIALKCDNKKSWRLTLKNDVEIAIGRDKVMEKMRRFVTVYDTHLNSVWIDIAAIDVRYSNGLAVRWVEGSESAKKYLRAAAATTNATRNAPTHP.

The interval 1-53 (MDSREDMVPDVLLEAPNPRRRQSADTSTERPTRPARREQGYARVTPRGERMGN) is disordered. Residues 1 to 70 (MDSREDMVPD…PDFFAWFDPR (70 aa)) are Cytoplasmic-facing. A compositionally biased stretch (basic and acidic residues) spans 27 to 52 (STERPTRPARREQGYARVTPRGERMG). The helical transmembrane segment at 71-87 (WLWVPLMVCLAVGGYWA) threads the bilayer. Residues 88-319 (YEPLEKLLER…NATRNAPTHP (232 aa)) are Periplasmic-facing. The POTRA domain maps to 97-166 (RPFKSVVVEG…DTLVVKIAEQ (70 aa)).

It belongs to the FtsQ/DivIB family. FtsQ subfamily. In terms of assembly, part of a complex composed of FtsB, FtsL and FtsQ.

It localises to the cell inner membrane. Essential cell division protein. May link together the upstream cell division proteins, which are predominantly cytoplasmic, with the downstream cell division proteins, which are predominantly periplasmic. May control correct divisome assembly. This is Cell division protein FtsQ from Cellvibrio japonicus (strain Ueda107) (Pseudomonas fluorescens subsp. cellulosa).